The chain runs to 469 residues: Small ribosomal subunit protein mS29 (469 aa).

Leu150 is a binding site for ATP.

The protein belongs to the mitochondrion-specific ribosomal protein mS29 family. In terms of assembly, component of the mitochondrial small ribosomal subunit (mt-SSU). Mature N.crassa 74S mitochondrial ribosomes consist of a small (37S) and a large (54S) subunit. The 37S small subunit contains a 16S ribosomal RNA (16S mt-rRNA) and 32 different proteins. The 54S large subunit contains a 23S rRNA (23S mt-rRNA) and 42 different proteins.

It localises to the mitochondrion. Functionally, component of the mitochondrial ribosome (mitoribosome), a dedicated translation machinery responsible for the synthesis of mitochondrial genome-encoded proteins, including at least some of the essential transmembrane subunits of the mitochondrial respiratory chain. The mitoribosomes are attached to the mitochondrial inner membrane and translation products are cotranslationally integrated into the membrane. This Neurospora crassa (strain ATCC 24698 / 74-OR23-1A / CBS 708.71 / DSM 1257 / FGSC 987) protein is Small ribosomal subunit protein mS29 (rsm23).